A 464-amino-acid chain; its full sequence is Kynureninase (464 aa).

An N-acetylmethionine modification is found at Met1. Residues Leu137, Thr138, 165–168 (FPSD), Ser221, Asp250, His253, and Tyr275 each bind pyridoxal 5'-phosphate. The residue at position 276 (Lys276) is an N6-(pyridoxal phosphate)lysine. Residues Trp305 and Asn333 each coordinate pyridoxal 5'-phosphate.

It belongs to the kynureninase family. As to quaternary structure, homodimer. Pyridoxal 5'-phosphate serves as cofactor.

It is found in the cytoplasm. It localises to the cytosol. It catalyses the reaction L-kynurenine + H2O = anthranilate + L-alanine + H(+). The enzyme catalyses 3-hydroxy-L-kynurenine + H2O = 3-hydroxyanthranilate + L-alanine + H(+). It functions in the pathway amino-acid degradation; L-kynurenine degradation; L-alanine and anthranilate from L-kynurenine: step 1/1. Its pathway is cofactor biosynthesis; NAD(+) biosynthesis; quinolinate from L-kynurenine: step 2/3. Catalyzes the cleavage of L-kynurenine (L-Kyn) and L-3-hydroxykynurenine (L-3OHKyn) into anthranilic acid (AA) and 3-hydroxyanthranilic acid (3-OHAA), respectively. Has a preference for the L-3-hydroxy form. Also has cysteine-conjugate-beta-lyase activity. The polypeptide is Kynureninase (Kynu) (Mus musculus (Mouse)).